A 293-amino-acid polypeptide reads, in one-letter code: uncharacterized protein (293 aa).

2 disordered regions span residues 121–154 (NLNF…SQNS) and 254–274 (DILQ…PQQQ). Over residues 133 to 149 (SYHHHSHSHSHHSHSHS) the composition is skewed to basic residues. Positions 260–272 (PPSPTPTPPPPPQ) are enriched in pro residues.

This is an uncharacterized protein from Dictyostelium discoideum (Social amoeba).